Consider the following 515-residue polypeptide: Lysine--tRNA ligase (515 aa).

Positions 425 and 432 each coordinate Mg(2+).

This sequence belongs to the class-II aminoacyl-tRNA synthetase family. In terms of assembly, homodimer. The cofactor is Mg(2+).

It localises to the cytoplasm. It catalyses the reaction tRNA(Lys) + L-lysine + ATP = L-lysyl-tRNA(Lys) + AMP + diphosphate. The polypeptide is Lysine--tRNA ligase (Cupriavidus metallidurans (strain ATCC 43123 / DSM 2839 / NBRC 102507 / CH34) (Ralstonia metallidurans)).